The primary structure comprises 147 residues: Hemoglobin subunit gamma-1 (147 aa).

Gly-2 is subject to N-acetylglycine. The Globin domain maps to 3-147 (HFTEEDKATI…VASALSSRYH (145 aa)). Thr-13 carries the post-translational modification Phosphothreonine. Ser-45, Ser-51, and Ser-53 each carry phosphoserine. An N6-acetyllysine modification is found at Lys-60. Residue His-64 participates in heme b binding. Residue Lys-83 is modified to N6-acetyllysine. His-93 provides a ligand contact to heme b. An S-nitrosocysteine modification is found at Cys-94. Phosphoserine is present on Ser-140.

Belongs to the globin family. Heterotetramer of two alpha chains and two gamma chains in fetal hemoglobin (Hb F). Red blood cells.

In terms of biological role, gamma chains make up the fetal hemoglobin F, in combination with alpha chains. The sequence is that of Hemoglobin subunit gamma-1 (HBG1) from Gorilla gorilla gorilla (Western lowland gorilla).